Here is a 512-residue protein sequence, read N- to C-terminus: Maturase K (512 aa).

This sequence belongs to the intron maturase 2 family. MatK subfamily.

It localises to the plastid. It is found in the chloroplast. Its function is as follows. Usually encoded in the trnK tRNA gene intron. Probably assists in splicing its own and other chloroplast group II introns. The sequence is that of Maturase K from Platanus occidentalis (Sycamore).